Reading from the N-terminus, the 183-residue chain is Ribosome rescue factor SmrB (183 aa).

The region spanning 98-173 (LDLHGLTQLQ…GDAALLVLIE (76 aa)) is the Smr domain.

The protein belongs to the SmrB family. As to quaternary structure, associates with collided ribosomes, but not with correctly translating polysomes.

Its function is as follows. Acts as a ribosome collision sensor. Detects stalled/collided disomes (pairs of ribosomes where the leading ribosome is stalled and a second ribosome has collided with it) and endonucleolytically cleaves mRNA at the 5' boundary of the stalled ribosome. Stalled/collided disomes form a new interface (primarily via the 30S subunits) that binds SmrB. Cleaved mRNA becomes available for tmRNA ligation, leading to ribosomal subunit dissociation and rescue of stalled ribosomes. The chain is Ribosome rescue factor SmrB from Escherichia fergusonii (strain ATCC 35469 / DSM 13698 / CCUG 18766 / IAM 14443 / JCM 21226 / LMG 7866 / NBRC 102419 / NCTC 12128 / CDC 0568-73).